Reading from the N-terminus, the 38-residue chain is Photosystem II reaction center protein L (38 aa).

A helical transmembrane segment spans residues 17–37; it reads SLYWGLLLIFVLAVLFSNYFF.

Belongs to the PsbL family. PSII is composed of 1 copy each of membrane proteins PsbA, PsbB, PsbC, PsbD, PsbE, PsbF, PsbH, PsbI, PsbJ, PsbK, PsbL, PsbM, PsbT, PsbX, PsbY, PsbZ, Psb30/Ycf12, at least 3 peripheral proteins of the oxygen-evolving complex and a large number of cofactors. It forms dimeric complexes.

Its subcellular location is the plastid. It localises to the chloroplast thylakoid membrane. In terms of biological role, one of the components of the core complex of photosystem II (PSII). PSII is a light-driven water:plastoquinone oxidoreductase that uses light energy to abstract electrons from H(2)O, generating O(2) and a proton gradient subsequently used for ATP formation. It consists of a core antenna complex that captures photons, and an electron transfer chain that converts photonic excitation into a charge separation. This subunit is found at the monomer-monomer interface and is required for correct PSII assembly and/or dimerization. This Adiantum capillus-veneris (Maidenhair fern) protein is Photosystem II reaction center protein L.